The chain runs to 339 residues: Protein pelota homolog (339 aa).

Belongs to the eukaryotic release factor 1 family. Pelota subfamily. Monomer. Requires a divalent metal cation as cofactor.

The protein resides in the cytoplasm. Its function is as follows. May function in recognizing stalled ribosomes, interact with stem-loop structures in stalled mRNA molecules, and effect endonucleolytic cleavage of the mRNA. May play a role in the release non-functional ribosomes and degradation of damaged mRNAs. Has endoribonuclease activity. In Thermoplasma acidophilum (strain ATCC 25905 / DSM 1728 / JCM 9062 / NBRC 15155 / AMRC-C165), this protein is Protein pelota homolog (pelA).